Here is an 80-residue protein sequence, read N- to C-terminus: Bacteriochlorophyll c-binding protein (80 aa).

His25 serves as a coordination point for a bacteriochlorophyll c. Residues 49–80 (PGVSRSGSGEGAFSSSPSNGFRPKRIRSRFNR) form a disordered region. The propeptide occupies 54–80 (SGSGEGAFSSSPSNGFRPKRIRSRFNR). The segment covering 70 to 80 (RPKRIRSRFNR) has biased composition (basic residues).

This sequence belongs to the BChl C/E-binding protein family.

Its subcellular location is the chlorosome. It is found in the chlorosome envelope. Its function is as follows. Component of the photosynthetic apparatus. The light harvesting B740 complex binds bacteriochlorophyll c. This Chloroflexus aurantiacus (strain ATCC 29366 / DSM 635 / J-10-fl) protein is Bacteriochlorophyll c-binding protein (cmsA).